A 1674-amino-acid chain; its full sequence is MLGAPDESSVRVAVRIRPQLAKEKIEGCHICTSVTPGEPQVFLGKDKAFTFDYVFDIDSQQEQIYIQCIEKLIEGCFEGYNATVFAYGQTGAGKTYTMGTGFDVNIVEEELGIISRAVKHLFKSIEEKKHIAIKNGLPAPDFKVNAQFLELYNEEVLDLFDTTRDIDAKSKKSNIRIHEDSTGGIYTVGVTTRTVNTESEMMQCLKLGALSRTTASTQMNVQSSRSHAIFTIHVCQTRVCPQIDADNATDNKIISESAQMNEFETLTAKFHFVDLAGSERLKRTGATGERAKEGISINCGLLALGNVISALGDKSKRATHVPYRDSKLTRLLQDSLGGNSQTIMIACVSPSDRDFMETLNTLKYANRARNIKNKVMVNQDRASQQINALRSEITRLQMELMEYKTGKRIIDEEGVESINDMFHENAMLQTENNNLRVRIKAMQETVDALRSRITQLVSDQANHVLARAGEGNEEISNMIHSYIKEIEDLRAKLLESEAVNENLRKNLTRATARAPYFSGSSTFSPTILSSDKETIEIIDLAKKDLEKLKRKEKRKKKRLQKLEESNREERSVAGKEDNTDTDQEKKEEKGVSERENNELEVEESQEVSDHEDEEEEEEEEEDDIDGGESSDESDSESDEKANYQADLANITCEIAIKQKLIDELENSQKRLQTLKKQYEEKLMMLQHKIRDTQLERDQVLQNLGSVESYSEEKAKKVRSEYEKKLQAMNKELQRLQAAQKEHARLLKNQSQYEKQLKKLQQDVMEMKKTKVRLMKQMKEEQEKARLTESRRNREIAQLKKDQRKRDHQLRLLEAQKRNQEVVLRRKTEEVTALRRQVRPMSDKVAGKVTRKLSSSDAPAQDTGSSAAAVETDASRTGAQQKMRIPVARVQALPTPATNGNRKKYQRKGLTGRVFISKTARMKWQLLERRVTDIIMQKMTISNMEADMNRLLKQREELTKRREKLSKRREKIVKENGEGDKNVANINEEMESLTANIDYINDSISDCQANIMQMEEAKEEGETLDVTAVINACTLTEARYLLDHFLSMGINKGLQAAQKEAQIKVLEGRLKQTEITSATQNQLLFHMLKEKAELNPELDALLGHALQDLDSVPLENVEDSTDEDAPLNSPGSEGSTLSSDLMKLCGEVKPKNKARRRTTTQMELLYADSSELASDTSTGDASLPGPLTPVAEGQEIGMNTETSGTSAREKELSPPPGLPSKIGSISRQSSLSEKKIPEPSPVTRRKAYEKAEKSKAKEQKHSDSGTSEASLSPPSSPPSRPRNELNVFNRLTVSQGNTSVQQDKSDESDSSLSEVHRSSRRGIINPFPASKGIRAFPLQCIHIAEGHTKAVLCVDSTDDLLFTGSKDRTCKVWNLVTGQEIMSLGGHPNNVVSVKYCNYTSLVFTVSTSYIKVWDIRDSAKCIRTLTSSGQVTLGDACSASTSRTVAIPSGENQINQIALNPTGTFLYAASGNAVRMWDLKRFQSTGKLTGHLGPVMCLTVDQISSGQDLIITGSKDHYIKMFDVTEGALGTVSPTHNFEPPHYDGIEALTIQGDNLFSGSRDNGIKKWDLTQKDLLQQVPNAHKDWVCALGVVPDHPVLLSGCRGGILKVWNMDTFMPVGEMKGHDSPINAICVNSTHIFTAADDRTVRIWKARNLQDGQISDTGDLGEDIASN.

At Met1 the chain carries N-acetylmethionine. The 363-residue stretch at 9–371 (SVRVAVRIRP…LKYANRARNI (363 aa)) folds into the Kinesin motor domain. Residue 88–95 (GQTGAGKT) participates in ATP binding. Residues 365-575 (ANRARNIKNK…NREERSVAGK (211 aa)) are a coiled coil. The residue at position 524 (Ser524) is a Phosphoserine. Disordered stretches follow at residues 556–641 (KKRL…DEKA), 779–804 (EEQE…DQRK), and 841–881 (SDKV…AQQK). Positions 560–597 (QKLEESNREERSVAGKEDNTDTDQEKKEEKGVSERENN) are enriched in basic and acidic residues. A compositionally biased stretch (acidic residues) spans 598 to 637 (ELEVEESQEVSDHEDEEEEEEEEEDDIDGGESSDESDSES). Polar residues predominate over residues 851-865 (KLSSSDAPAQDTGSS). Coiled coils occupy residues 931–1019 (TDII…AKEE) and 1053–1083 (LQAA…NQLL). Residues 1116-1138 (VEDSTDEDAPLNSPGSEGSTLSS) are disordered. Residues 1128–1138 (SPGSEGSTLSS) show a composition bias toward polar residues. The interaction with KANK1 and KANK2 stretch occupies residues 1146–1167 (EVKPKNKARRRTTTQMELLYAD). Composition is skewed to polar residues over residues 1170–1179 (ELASDTSTGD) and 1196–1205 (GMNTETSGTS). The interval 1170 to 1318 (ELASDTSTGD…SSLSEVHRSS (149 aa)) is disordered. Phosphoserine occurs at positions 1212, 1225, 1229, and 1239. The span at 1245-1262 (KAYEKAEKSKAKEQKHSD) shows a compositional bias: basic and acidic residues. A compositionally biased stretch (polar residues) spans 1288-1297 (NRLTVSQGNT). WD repeat units lie at residues 1345-1382 (GHTK…EIMS), 1385-1423 (GHPN…KCIR), 1449-1487 (SGEN…STGK), 1490-1532 (GHLG…LGTV), 1541-1578 (PHYD…LLQQ), 1582-1621 (AHKD…PVGE), and 1624-1661 (GHDS…DGQI). Residue Ser1662 is modified to Phosphoserine. Phosphothreonine is present on Thr1664. A Phosphoserine modification is found at Ser1673.

The protein belongs to the TRAFAC class myosin-kinesin ATPase superfamily. Kinesin family. As to quaternary structure, part of a cortical microtubule stabilization complex (CMSC) composed of KANK1, PPFIA1, PPFIBP1, ERC1/ELKS, PHLDB2/LL5beta, CLASPs, KIF21A and possibly additional interactors; within CMSCs KANK1 and PHLDB2/LL5beta seem to be the core components for recruiting microtubule-binding proteins KIF21A and CLASPs, whereas PPFIA1, PPFIBP1 and ERC1/ELKS serve as scaffolds for protein clustering. Interacts (via residues 1146-1167) with KANK1 (via ankyrin repeats 1-5) and KANK2 (via ankyrin repeats 1-5).

It localises to the cytoplasm. Its subcellular location is the cytoskeleton. It is found in the cell cortex. The protein resides in the cell projection. The protein localises to the axon. It localises to the dendrite. Its subcellular location is the growth cone. Its function is as follows. Processive microtubule plus-end directed motor protein involved in neuronal axon guidance. Is recruited by KANK1 to cortical microtubule stabilizing complexes (CMSCs) at focal adhesions (FAs) rims where it promotes microtubule capture and stability. Controls microtubule polymerization rate at axonal growth cones and suppresses microtubule growth without inducing microtubule disassembly once it reaches the cell cortex. The sequence is that of Kinesin-like protein KIF21A (KIF21A) from Homo sapiens (Human).